Here is a 133-residue protein sequence, read N- to C-terminus: Antifungal protein ginkbilobin-like protein 1 (133 aa).

Residues 1 to 24 (MSMGSFGFALAVMVLAVLVASAAG) form the signal peptide. Residues 28–133 (TNFVSSACNT…CFIRYEQYSI (106 aa)) form the Gnk2-homologous domain. 3 disulfides stabilise this stretch: C35–C111, C87–C96, and C99–C124. N36 contributes to the alpha-D-mannopyranose binding site. The alpha-D-mannopyranose site is built by R118 and E129.

Functionally, exerts antifungal activity through its carbohydrate-binding specificity. In Picea sitchensis (Sitka spruce), this protein is Antifungal protein ginkbilobin-like protein 1.